A 452-amino-acid polypeptide reads, in one-letter code: Phosphoglucosamine mutase (452 aa).

The active-site Phosphoserine intermediate is the Ser103. Ser103, Asp244, Asp246, and Asp248 together coordinate Mg(2+). Phosphoserine is present on Ser103.

It belongs to the phosphohexose mutase family. Mg(2+) serves as cofactor. In terms of processing, activated by phosphorylation.

It catalyses the reaction alpha-D-glucosamine 1-phosphate = D-glucosamine 6-phosphate. Catalyzes the conversion of glucosamine-6-phosphate to glucosamine-1-phosphate. In Fusobacterium nucleatum subsp. nucleatum (strain ATCC 25586 / DSM 15643 / BCRC 10681 / CIP 101130 / JCM 8532 / KCTC 2640 / LMG 13131 / VPI 4355), this protein is Phosphoglucosamine mutase.